The primary structure comprises 277 residues: Glycerol-3-phosphate acyltransferase (277 aa).

Helical transmembrane passes span 3 to 23, 55 to 75, 79 to 99, 111 to 131, and 155 to 175; these read FFIF…AIIV, IMVM…AKLL, PVTV…PVFF, IGAL…TWLL, and LILV…ILVL. The interval 231–277 is disordered; sequence KTEQAEAVKKPKAKKATTKAKKTTSKEETAKKPKSTKPKTKTVKEKE. 2 stretches are compositionally biased toward basic residues: residues 240–253 and 262–271; these read KPKA…AKKT and KPKSTKPKTK.

Belongs to the PlsY family. In terms of assembly, probably interacts with PlsX.

Its subcellular location is the cell inner membrane. The catalysed reaction is an acyl phosphate + sn-glycerol 3-phosphate = a 1-acyl-sn-glycero-3-phosphate + phosphate. The protein operates within lipid metabolism; phospholipid metabolism. Its function is as follows. Catalyzes the transfer of an acyl group from acyl-phosphate (acyl-PO(4)) to glycerol-3-phosphate (G3P) to form lysophosphatidic acid (LPA). This enzyme utilizes acyl-phosphate as fatty acyl donor, but not acyl-CoA or acyl-ACP. This Legionella pneumophila (strain Lens) protein is Glycerol-3-phosphate acyltransferase.